The chain runs to 390 residues: Chorismate synthase 1 (390 aa).

NADP(+) contacts are provided by Arg-39 and Arg-45. The segment at 95-117 (EQEEKEMKRKVTKPRPGHADLNG) is disordered. FMN contacts are provided by residues 132 to 134 (RSS), 253 to 254 (NA), Gly-298, 313 to 317 (KPIPT), and Arg-339.

This sequence belongs to the chorismate synthase family. In terms of assembly, homotetramer. The cofactor is FMNH2.

The enzyme catalyses 5-O-(1-carboxyvinyl)-3-phosphoshikimate = chorismate + phosphate. Its pathway is metabolic intermediate biosynthesis; chorismate biosynthesis; chorismate from D-erythrose 4-phosphate and phosphoenolpyruvate: step 7/7. In terms of biological role, catalyzes the anti-1,4-elimination of the C-3 phosphate and the C-6 proR hydrogen from 5-enolpyruvylshikimate-3-phosphate (EPSP) to yield chorismate, which is the branch point compound that serves as the starting substrate for the three terminal pathways of aromatic amino acid biosynthesis. This reaction introduces a second double bond into the aromatic ring system. The protein is Chorismate synthase 1 of Bacillus thuringiensis (strain Al Hakam).